A 536-amino-acid chain; its full sequence is MFS-type efflux pump MFS1 (536 aa).

3 helical membrane passes run 30-50, 80-100, and 102-122; these read VTGL…LLVA, YLLT…FFPV, and WVFL…GAAP. Asn123 carries an N-linked (GlcNAc...) asparagine glycan. The next 3 helical transmembrane spans lie at 133–153, 163–183, and 191–211; these read VAGI…AYSI, GAIG…GGAF, and WCFY…LIFL. N-linked (GlcNAc...) asparagine glycosylation occurs at Asn221. 8 consecutive transmembrane segments (helical) span residues 234–254, 264–284, 306–326, 342–362, 366–386, 400–420, 426–446, and 503–523; these read IGTA…QWGG, IIAL…FQIR, FFLF…PIWF, IPMV…VTAI, APLY…LTTF, IIFG…AQAV, VAVG…LFVS, and TWYV…GMEW.

The protein belongs to the major facilitator superfamily. TCR/Tet family.

It localises to the cell membrane. In terms of biological role, MFS-type efflux pump involved in the modulation susceptibility to azoles, including fluconazole, itraconazole, ketoconazole, miconazole and voriconazole. Confers also increased resistance chloramphenicol and thiamphenicol, suggesting that it acts as a pleiotropic drug transporter with a broad substrate spectrum. Finally, increases the tolerance to cycloheximide when expressed in S.cerevisiae, but not in dermatophyte species. This chain is MFS-type efflux pump MFS1, found in Trichophyton rubrum (strain ATCC MYA-4607 / CBS 118892) (Athlete's foot fungus).